Reading from the N-terminus, the 70-residue chain is Large ribosomal subunit protein bL31c (70 aa).

Belongs to the bacterial ribosomal protein bL31 family. Type A subfamily. Part of the 50S ribosomal subunit.

It localises to the plastid. The protein localises to the chloroplast. Binds the 23S rRNA. This is Large ribosomal subunit protein bL31c from Porphyra purpurea (Red seaweed).